The sequence spans 390 residues: Phosphoglycerate kinase (390 aa).

Residues 19 to 21, Arg34, 57 to 60, Arg115, and Arg148 each bind substrate; these read DYN and HLGR. Residues Lys198, Gly289, Glu320, and 347–350 each bind ATP; that span reads GGDS.

Belongs to the phosphoglycerate kinase family. Monomer.

The protein localises to the cytoplasm. The catalysed reaction is (2R)-3-phosphoglycerate + ATP = (2R)-3-phospho-glyceroyl phosphate + ADP. It participates in carbohydrate degradation; glycolysis; pyruvate from D-glyceraldehyde 3-phosphate: step 2/5. The protein is Phosphoglycerate kinase (pgk) of Thermus thermophilus (strain ATCC 27634 / DSM 579 / HB8).